Here is a 158-residue protein sequence, read N- to C-terminus: Probable transcription regulator ArfM (158 aa).

Activates, in anaerobic conditions, the transcription of the fermentative operons lctEP and alsDS, of the hmp gene encoding a flavohemoglobin-like protein, the nitrite reductase operon nasDE and the heme biosynthesis genes hemN and hemZ. The protein is Probable transcription regulator ArfM (arfM) of Bacillus subtilis (strain 168).